A 218-amino-acid polypeptide reads, in one-letter code: Small ribosomal subunit protein uS3 (218 aa).

The 69-residue stretch at 38–106 (IREYINKRLQ…RVHINIVEIK (69 aa)) folds into the KH type-2 domain.

Belongs to the universal ribosomal protein uS3 family. As to quaternary structure, part of the 30S ribosomal subunit. Forms a tight complex with proteins S10 and S14.

Its function is as follows. Binds the lower part of the 30S subunit head. Binds mRNA in the 70S ribosome, positioning it for translation. The chain is Small ribosomal subunit protein uS3 from Geobacillus sp. (strain WCH70).